The following is a 253-amino-acid chain: 3-deoxy-manno-octulosonate cytidylyltransferase (253 aa).

Belongs to the KdsB family.

The protein resides in the cytoplasm. It carries out the reaction 3-deoxy-alpha-D-manno-oct-2-ulosonate + CTP = CMP-3-deoxy-beta-D-manno-octulosonate + diphosphate. Its pathway is nucleotide-sugar biosynthesis; CMP-3-deoxy-D-manno-octulosonate biosynthesis; CMP-3-deoxy-D-manno-octulosonate from 3-deoxy-D-manno-octulosonate and CTP: step 1/1. The protein operates within bacterial outer membrane biogenesis; lipopolysaccharide biosynthesis. Activates KDO (a required 8-carbon sugar) for incorporation into bacterial lipopolysaccharide in Gram-negative bacteria. This is 3-deoxy-manno-octulosonate cytidylyltransferase from Neisseria meningitidis serogroup C / serotype 2a (strain ATCC 700532 / DSM 15464 / FAM18).